The chain runs to 454 residues: Caspase-9 (454 aa).

A CARD domain is found at 1-92 (MDEADRQLLR…GTLASLLQSG (92 aa)). Threonine 163 is subject to Phosphothreonine; by MAPK1. Residue tyrosine 191 is modified to Phosphotyrosine; by ABL1. Residues histidine 275 and cysteine 325 contribute to the active site. A phosphoserine mark is found at serine 340 and serine 348. Positions 354-367 (AVPYQEGPRPLDQL) are excised as a propeptide.

It belongs to the peptidase C14A family. As to quaternary structure, heterotetramer that consists of two anti-parallel arranged heterodimers, each one formed by a 35 kDa (p35) and a 10 kDa (p10) subunit. Caspase-9 and APAF1 bind to each other via their respective NH2-terminal CED-3 homologous domains in the presence of cytochrome C and ATP. Interacts (inactive form) with EFHD2. Interacts with HAX1. Interacts with BIRC2/c-IAP1, XIAP/BIRC4, BIRC5/survivin, BIRC6/bruce and BIRC7/livin. Interacts with ABL1 (via SH3 domain); the interaction is direct and increased in the response of cells to genotoxic stress and ABL1/c-Abl activation. Interacts with BCL2L10. In terms of processing, cleavages at Asp-353 by granzyme B and at Asp-368 by caspase-3 generate the two active subunits. Caspase-8 and -10 can also be involved in these processing events. Post-translationally, phosphorylated at Thr-163 by MAPK1/ERK2. Phosphorylation at Thr-163 is sufficient to block caspase-9 processing and subsequent caspase-3 activation. Phosphorylation on Tyr-191 by ABL1/c-Abl; occurs in the response of cells to DNA damage. Ubiquitinated by BIRC6; this activity is inhibited by DIABLO/SMAC.

The catalysed reaction is Strict requirement for an Asp residue at position P1 and with a marked preference for His at position P2. It has a preferred cleavage sequence of Leu-Gly-His-Asp-|-Xaa.. Inhibited by BIRC6; following inhibition of BIRC6-caspase binding by DIABLO/SMAC, BIRC6 is subjected to caspase cleavage, leading to an increase in active caspases. Its function is as follows. Involved in the activation cascade of caspases responsible for apoptosis execution. Binding of caspase-9 to Apaf-1 leads to activation of the protease which then cleaves and activates effector caspases caspase-3 (CASP3) or caspase-7 (CASP7). Promotes DNA damage-induced apoptosis in a ABL1/c-Abl-dependent manner. Proteolytically cleaves poly(ADP-ribose) polymerase (PARP). Cleaves BIRC6 following inhibition of BIRC6-caspase binding by DIABLO/SMAC. The chain is Caspase-9 (Casp9) from Mus musculus (Mouse).